A 303-amino-acid polypeptide reads, in one-letter code: Secreted mono- and diacylglycerol lipase LIP4 (303 aa).

The first 16 residues, Met-1–Cys-16, serve as a signal peptide directing secretion. A disulfide bond links Cys-54 and Cys-293. Residue Ser-167 is the Nucleophile of the active site. The active site involves Asp-224.

The protein belongs to the AB hydrolase superfamily. Lipase family. Class 3 subfamily.

The protein localises to the secreted. The catalysed reaction is a monoacylglycerol + H2O = glycerol + a fatty acid + H(+). It catalyses the reaction a diacylglycerol + H2O = a monoacylglycerol + a fatty acid + H(+). Its function is as follows. Secreted lipase involved in Dandruff and seborrheic dermatitis (D/SD) probably via lipase-mediated breakdown of sebaceous lipids and release of irritating free fatty acids. Shows activity against monoglyceride and diglyceride substrates. Due to an absence of fatty acid synthase genes in Malassezia species, secretory lipases are essential for the yeast to generate free fatty acids from degradation of sebum and assimilate them as lipid sources for growth. Plays an essential role at the pathogen-host interface during disease progression. The sequence is that of Secreted mono- and diacylglycerol lipase LIP4 from Malassezia restricta (strain ATCC 96810 / NBRC 103918 / CBS 7877) (Seborrheic dermatitis infection agent).